We begin with the raw amino-acid sequence, 314 residues long: BURP domain-containing protein 8 (314 aa).

The N-terminal stretch at 1-16 (MDLVRLTSLLPPSVMG) is a signal peptide. The region spanning 98-314 (FFLEKDLFPG…PLGDMLWVRN (217 aa)) is the BURP domain.

As to expression, expressed in shoot and panicles.

The protein is BURP domain-containing protein 8 (BURP8) of Oryza sativa subsp. japonica (Rice).